Reading from the N-terminus, the 101-residue chain is Urease subunit beta (101 aa).

It belongs to the urease beta subunit family. As to quaternary structure, heterotrimer of UreA (gamma), UreB (beta) and UreC (alpha) subunits. Three heterotrimers associate to form the active enzyme.

The protein localises to the cytoplasm. The catalysed reaction is urea + 2 H2O + H(+) = hydrogencarbonate + 2 NH4(+). Its pathway is nitrogen metabolism; urea degradation; CO(2) and NH(3) from urea (urease route): step 1/1. This Actinobacillus pleuropneumoniae serotype 5b (strain L20) protein is Urease subunit beta.